Here is a 116-residue protein sequence, read N- to C-terminus: Ribosome-binding factor A (116 aa).

It belongs to the RbfA family. Monomer. Binds 30S ribosomal subunits, but not 50S ribosomal subunits or 70S ribosomes.

It localises to the cytoplasm. In terms of biological role, one of several proteins that assist in the late maturation steps of the functional core of the 30S ribosomal subunit. Associates with free 30S ribosomal subunits (but not with 30S subunits that are part of 70S ribosomes or polysomes). Required for efficient processing of 16S rRNA. May interact with the 5'-terminal helix region of 16S rRNA. This Staphylococcus aureus (strain JH9) protein is Ribosome-binding factor A.